We begin with the raw amino-acid sequence, 646 residues long: Interferon-induced GTP-binding protein MxA (646 aa).

The Dynamin-type G domain occupies 34–307 (DLALPAIAVI…LVHHIQKSLP (274 aa)). A G1 motif region spans residues 44–51 (GDQSSGKS). Residue 44–51 (GDQSSGKS) coordinates GTP. The segment at 69-71 (VTR) is G2 motif. The G3 motif stretch occupies residues 145–148 (DLPG). GTP is bound by residues 145–149 (DLPGI) and 214–217 (TKPD). Residues 214-217 (TKPD) form a G4 motif region. The G5 motif stretch occupies residues 246–249 (RCRG). The GED domain occupies 546 to 637 (LREMRLHLKS…PLGHLLEVTF (92 aa)).

Belongs to the TRAFAC class dynamin-like GTPase superfamily. Dynamin/Fzo/YdjA family.

It localises to the cytoplasm. The protein is Interferon-induced GTP-binding protein MxA (mxa) of Danio rerio (Zebrafish).